A 327-amino-acid polypeptide reads, in one-letter code: Transaldolase (327 aa).

The Schiff-base intermediate with substrate role is filled by Lys132.

It belongs to the transaldolase family. Type 1 subfamily.

The protein resides in the cytoplasm. The catalysed reaction is D-sedoheptulose 7-phosphate + D-glyceraldehyde 3-phosphate = D-erythrose 4-phosphate + beta-D-fructose 6-phosphate. The protein operates within carbohydrate degradation; pentose phosphate pathway; D-glyceraldehyde 3-phosphate and beta-D-fructose 6-phosphate from D-ribose 5-phosphate and D-xylulose 5-phosphate (non-oxidative stage): step 2/3. In terms of biological role, transaldolase is important for the balance of metabolites in the pentose-phosphate pathway. The sequence is that of Transaldolase from Chlamydia pneumoniae (Chlamydophila pneumoniae).